A 292-amino-acid chain; its full sequence is Ribosomal protein L11 methyltransferase (292 aa).

S-adenosyl-L-methionine-binding residues include Thr-136, Gly-159, Asp-181, and Asn-228.

The protein belongs to the methyltransferase superfamily. PrmA family.

The protein localises to the cytoplasm. The catalysed reaction is L-lysyl-[protein] + 3 S-adenosyl-L-methionine = N(6),N(6),N(6)-trimethyl-L-lysyl-[protein] + 3 S-adenosyl-L-homocysteine + 3 H(+). In terms of biological role, methylates ribosomal protein L11. This is Ribosomal protein L11 methyltransferase from Agrobacterium fabrum (strain C58 / ATCC 33970) (Agrobacterium tumefaciens (strain C58)).